A 78-amino-acid chain; its full sequence is Large ribosomal subunit protein bL28 (78 aa).

The disordered stretch occupies residues 1 to 23 (MSRVCQVTGKKPMVGNNRSHAKN).

Belongs to the bacterial ribosomal protein bL28 family.

This chain is Large ribosomal subunit protein bL28, found in Shewanella sediminis (strain HAW-EB3).